Consider the following 86-residue polypeptide: Small ribosomal subunit protein bS16 (86 aa).

This sequence belongs to the bacterial ribosomal protein bS16 family.

In Bordetella avium (strain 197N), this protein is Small ribosomal subunit protein bS16.